We begin with the raw amino-acid sequence, 310 residues long: Calcium homeostasis modulator protein 5 (310 aa).

Transmembrane regions (helical) follow at residues 17-37 (TIGYSVMAILTIGSERIFSMV), 49-69 (FPYGICFLLGPAVVLLVVGFF), 101-121 (LIKVLYGACVAPVMWLTVALL), and 181-201 (QILGWSVIITAVVIALIGTCY).

The protein belongs to the CALHM family.

Its subcellular location is the membrane. Functionally, pore-forming subunit of a voltage-gated ion channel. The polypeptide is Calcium homeostasis modulator protein 5 (calhm5.1) (Danio rerio (Zebrafish)).